We begin with the raw amino-acid sequence, 596 residues long: Elongation factor 4 (596 aa).

Positions 2–184 (KNIRNFSIIA…TIVKNIPSPA (183 aa)) constitute a tr-type G domain. Residues 14 to 19 (DHGKST) and 131 to 134 (NKID) contribute to the GTP site.

The protein belongs to the TRAFAC class translation factor GTPase superfamily. Classic translation factor GTPase family. LepA subfamily.

The protein resides in the cell inner membrane. It catalyses the reaction GTP + H2O = GDP + phosphate + H(+). Functionally, required for accurate and efficient protein synthesis under certain stress conditions. May act as a fidelity factor of the translation reaction, by catalyzing a one-codon backward translocation of tRNAs on improperly translocated ribosomes. Back-translocation proceeds from a post-translocation (POST) complex to a pre-translocation (PRE) complex, thus giving elongation factor G a second chance to translocate the tRNAs correctly. Binds to ribosomes in a GTP-dependent manner. The sequence is that of Elongation factor 4 from Colwellia psychrerythraea (strain 34H / ATCC BAA-681) (Vibrio psychroerythus).